We begin with the raw amino-acid sequence, 168 residues long: Sensor histidine kinase component HK1 (168 aa).

One can recognise a Histidine kinase; second part domain in the interval 1–141 (MPITPLLHES…ELRITLPTPR (141 aa)). The tract at residues 137–168 (LPTPRPPFHEELPRITSSDTKDPNREHDTSDQ) is disordered. A compositionally biased stretch (basic and acidic residues) spans 143–168 (PFHEELPRITSSDTKDPNREHDTSDQ).

Interacts with HK2.

It carries out the reaction ATP + protein L-histidine = ADP + protein N-phospho-L-histidine.. Member of the three-protein two-component system HK1/HK2/TcrA. Kinase that binds ATP and catalyzes the transfer of a phosphoryl group from ATP to HK2. This is Sensor histidine kinase component HK1 from Mycobacterium tuberculosis (strain ATCC 25618 / H37Rv).